A 255-amino-acid chain; its full sequence is MVPWLGPDDPFPSVERALGAASGAPGLLAASADLLPSRLIDAYRRGIFPWYSDGQPVLWWSPDPRMILVPAEFRISATFRKTLKRVLREPRWEIRVDCDFAGVMRACAQAPRRGQRGTWITAEIIDAYSSLHRAGDAHSIETWLDGRRVGGLYGVSFGGMFFGESMYADVSDASKIALAALVAHLREHRVVMIDCQQNTSHLASLGGREIARKAFVAHVRRAVAEPPISWRFDKTVVAGLLGQAASATAADAFDR.

It belongs to the L/F-transferase family.

Its subcellular location is the cytoplasm. It carries out the reaction N-terminal L-lysyl-[protein] + L-leucyl-tRNA(Leu) = N-terminal L-leucyl-L-lysyl-[protein] + tRNA(Leu) + H(+). The enzyme catalyses N-terminal L-arginyl-[protein] + L-leucyl-tRNA(Leu) = N-terminal L-leucyl-L-arginyl-[protein] + tRNA(Leu) + H(+). The catalysed reaction is L-phenylalanyl-tRNA(Phe) + an N-terminal L-alpha-aminoacyl-[protein] = an N-terminal L-phenylalanyl-L-alpha-aminoacyl-[protein] + tRNA(Phe). Functions in the N-end rule pathway of protein degradation where it conjugates Leu, Phe and, less efficiently, Met from aminoacyl-tRNAs to the N-termini of proteins containing an N-terminal arginine or lysine. The chain is Leucyl/phenylalanyl-tRNA--protein transferase from Burkholderia thailandensis (strain ATCC 700388 / DSM 13276 / CCUG 48851 / CIP 106301 / E264).